The chain runs to 396 residues: Elongation factor Tu 1 (396 aa).

The tr-type G domain maps to 10-206 (KLHVNVGTIG…ALDTFIPDPT (197 aa)). The G1 stretch occupies residues 19–26 (GHVDHGKT). 19–26 (GHVDHGKT) is a binding site for GTP. Thr26 is a binding site for Mg(2+). The interval 60 to 64 (GITIS) is G2. Residues 81–84 (DCPG) form a G3 region. GTP is bound by residues 81–85 (DCPGH) and 136–139 (NKAD). The tract at residues 136 to 139 (NKAD) is G4. A G5 region spans residues 174–176 (SAR).

It belongs to the TRAFAC class translation factor GTPase superfamily. Classic translation factor GTPase family. EF-Tu/EF-1A subfamily. In terms of assembly, monomer.

It is found in the cytoplasm. The enzyme catalyses GTP + H2O = GDP + phosphate + H(+). GTP hydrolase that promotes the GTP-dependent binding of aminoacyl-tRNA to the A-site of ribosomes during protein biosynthesis. In Xanthomonas campestris pv. campestris (strain B100), this protein is Elongation factor Tu 1.